Consider the following 619-residue polypeptide: Magnesium-chelatase 67 kDa subunit (619 aa).

ATP is bound at residue 33-40 (STVGSGKS). The interval 273–321 (TRMPEREPSEEEMQQEEPPPPEEQPEQEGEDENAPPDETDSDADEEQEE) is disordered. Residues 280–321 (PSEEEMQQEEPPPPEEQPEQEGEDENAPPDETDSDADEEQEE) show a composition bias toward acidic residues. Residues 431 to 619 (LFIFMVDASG…AEQIVEAALS (189 aa)) enclose the VWFA domain.

The protein belongs to the Mg-chelatase subunits D/I family.

It catalyses the reaction protoporphyrin IX + Mg(2+) + ATP + H2O = Mg-protoporphyrin IX + ADP + phosphate + 3 H(+). It participates in porphyrin-containing compound metabolism; bacteriochlorophyll biosynthesis. Involved in bacteriochlorophyll biosynthesis; introduces a magnesium ion into protoporphyrin IX to yield Mg-protoporphyrin IX. In Chlorobaculum parvum (strain DSM 263 / NCIMB 8327) (Chlorobium vibrioforme subsp. thiosulfatophilum), this protein is Magnesium-chelatase 67 kDa subunit (bchD).